The following is a 528-amino-acid chain: DNA primase large subunit (528 aa).

Residues 210–239 (NEEHQRKQYFQQEKFIKLPFENVIELVGNR) form an H-T-H-like motif region. [4Fe-4S] cluster is bound by residues Cys-336, Cys-417, Cys-434, and Cys-474.

It belongs to the eukaryotic-type primase large subunit family. As to quaternary structure, DNA polymerase alpha:primase is a four subunit enzyme complex, which is assembled throughout the cell cycle, and consists of the two DNA polymerase subunits A POL1 and B POL12, and the DNA primase large PRI2 and small PRI1 subunits. Interacts with MCM10. [4Fe-4S] cluster is required as a cofactor.

Its function is as follows. DNA primase is the polymerase that synthesizes small RNA primers for the Okazaki fragments made during discontinuous DNA replication. In a complex with DNA polymerase alpha (DNA polymerase alpha:primase) constitutes a replicative polymerase. Both primase components participate in formation of the active center, but the ATP-binding site is exclusively located on p48. The protein is DNA primase large subunit (PRI2) of Saccharomyces cerevisiae (strain ATCC 204508 / S288c) (Baker's yeast).